Consider the following 169-residue polypeptide: Phosphopantetheine adenylyltransferase (169 aa).

A substrate-binding site is contributed by T13. Residues 13–14 (TF) and H21 each bind ATP. 3 residues coordinate substrate: K45, L82, and R96. Residues 97-99 (GLR), E107, and 132-138 (HQFISSR) each bind ATP.

It belongs to the bacterial CoaD family. In terms of assembly, homohexamer. It depends on Mg(2+) as a cofactor.

It localises to the cytoplasm. It carries out the reaction (R)-4'-phosphopantetheine + ATP + H(+) = 3'-dephospho-CoA + diphosphate. Its pathway is cofactor biosynthesis; coenzyme A biosynthesis; CoA from (R)-pantothenate: step 4/5. Reversibly transfers an adenylyl group from ATP to 4'-phosphopantetheine, yielding dephospho-CoA (dPCoA) and pyrophosphate. This chain is Phosphopantetheine adenylyltransferase, found in Acidiphilium cryptum (strain JF-5).